A 351-amino-acid chain; its full sequence is Phosphate acyltransferase (351 aa).

The protein belongs to the PlsX family. In terms of assembly, homodimer. Probably interacts with PlsY.

It localises to the cytoplasm. The enzyme catalyses a fatty acyl-[ACP] + phosphate = an acyl phosphate + holo-[ACP]. Its pathway is lipid metabolism; phospholipid metabolism. Its function is as follows. Catalyzes the reversible formation of acyl-phosphate (acyl-PO(4)) from acyl-[acyl-carrier-protein] (acyl-ACP). This enzyme utilizes acyl-ACP as fatty acyl donor, but not acyl-CoA. The protein is Phosphate acyltransferase of Neisseria meningitidis serogroup A / serotype 4A (strain DSM 15465 / Z2491).